A 492-amino-acid polypeptide reads, in one-letter code: UDP-N-acetylmuramoyl-L-alanyl-D-glutamate--2,6-diaminopimelate ligase (492 aa).

Ser-30 is a binding site for UDP-N-acetyl-alpha-D-muramoyl-L-alanyl-D-glutamate. ATP is bound at residue 114–120; that stretch reads GTNGKTS. UDP-N-acetyl-alpha-D-muramoyl-L-alanyl-D-glutamate-binding positions include 156-157, Ser-183, Gln-189, and Arg-191; that span reads TT. At Lys-223 the chain carries N6-carboxylysine. Residues Arg-389, 413-416, Gly-462, and Glu-466 each bind meso-2,6-diaminopimelate; that span reads DNPR. Positions 413-416 match the Meso-diaminopimelate recognition motif motif; the sequence is DNPR.

This sequence belongs to the MurCDEF family. MurE subfamily. Mg(2+) is required as a cofactor. Carboxylation is probably crucial for Mg(2+) binding and, consequently, for the gamma-phosphate positioning of ATP.

The protein resides in the cytoplasm. It carries out the reaction UDP-N-acetyl-alpha-D-muramoyl-L-alanyl-D-glutamate + meso-2,6-diaminopimelate + ATP = UDP-N-acetyl-alpha-D-muramoyl-L-alanyl-gamma-D-glutamyl-meso-2,6-diaminopimelate + ADP + phosphate + H(+). The protein operates within cell wall biogenesis; peptidoglycan biosynthesis. Catalyzes the addition of meso-diaminopimelic acid to the nucleotide precursor UDP-N-acetylmuramoyl-L-alanyl-D-glutamate (UMAG) in the biosynthesis of bacterial cell-wall peptidoglycan. This chain is UDP-N-acetylmuramoyl-L-alanyl-D-glutamate--2,6-diaminopimelate ligase, found in Neisseria meningitidis serogroup B (strain ATCC BAA-335 / MC58).